Here is a 459-residue protein sequence, read N- to C-terminus: Putrescine aminotransferase (459 aa).

Pyridoxal 5'-phosphate contacts are provided by residues glycine 150–threonine 151 and glutamine 274. At lysine 300 the chain carries N6-(pyridoxal phosphate)lysine. Pyridoxal 5'-phosphate is bound at residue threonine 332.

It belongs to the class-III pyridoxal-phosphate-dependent aminotransferase family. Putrescine aminotransferase subfamily. The cofactor is pyridoxal 5'-phosphate.

The enzyme catalyses an alkane-alpha,omega-diamine + 2-oxoglutarate = an omega-aminoaldehyde + L-glutamate. The catalysed reaction is putrescine + 2-oxoglutarate = 1-pyrroline + L-glutamate + H2O. It carries out the reaction cadaverine + 2-oxoglutarate = 5-aminopentanal + L-glutamate. It functions in the pathway amine and polyamine degradation; putrescine degradation; 4-aminobutanal from putrescine (transaminase route): step 1/1. Catalyzes the aminotransferase reaction from putrescine to 2-oxoglutarate, leading to glutamate and 4-aminobutanal, which spontaneously cyclizes to form 1-pyrroline. This is the first step in one of two pathways for putrescine degradation, where putrescine is converted into 4-aminobutanoate (gamma-aminobutyrate or GABA) via 4-aminobutanal. Also functions as a cadaverine transaminase in a a L-lysine degradation pathway to succinate that proceeds via cadaverine, glutarate and L-2-hydroxyglutarate. The sequence is that of Putrescine aminotransferase from Escherichia coli O9:H4 (strain HS).